Consider the following 1451-residue polypeptide: Glutamate receptor ionotropic, NMDA 2A (1451 aa).

The first 20 residues, 1–20 (MGMFVLLLYTFLYAGDLGHG), serve as a signal peptide directing secretion. The Extracellular segment spans residues 21–547 (AEKSFPVLNI…PSAFLEPFSA (527 aa)). An N-linked (GlcNAc...) asparagine glycan is attached at N67. An intrachain disulfide couples C79 to C312. Positions 120, 258, and 274 each coordinate Zn(2+). Residues N332, N372, N435, and N436 are each glycosylated (N-linked (GlcNAc...) asparagine). Cystine bridges form between C421/C447 and C428/C448. 3 residues coordinate L-glutamate: S503, T505, and R510. A glycan (N-linked (GlcNAc...) asparagine) is linked at N533. The helical transmembrane segment at 548 to 568 (SVWVMMFVMLLLVSAMAVFIF) threads the bilayer. The Cytoplasmic segment spans residues 569–592 (EYFSPVGYNRNLAQGKDPHGPSFT). A pore-forming region spans residues 591–612 (FTIGKAVWLLWGLVFNNSVPVQ). The segment at residues 593–612 (IGKAVWLLWGLVFNNSVPVQ) is an intramembrane region (discontinuously helical). Residues 613 to 617 (NPKGT) are Cytoplasmic-facing. Residues 618 to 637 (TSKIIVSIWAFFAVIFLASY) traverse the membrane as a helical segment. At 638–808 (TANLAAFMIQ…VMSSQLDIDN (171 aa)) the chain is on the extracellular side. The N-linked (GlcNAc...) asparagine glycan is linked to N679. 3 residues coordinate L-glutamate: S681, T682, and D723. C737 and C792 are oxidised to a cystine. A helical membrane pass occupies residues 809 to 829 (MAGVFYMLAAAMALSLITFVW). Over 830–1451 (EHLFYWKLRF…KKMPSLESDV (622 aa)) the chain is Cytoplasmic. The span at 1011-1022 (TLRQTQGSVNEN) shows a compositional bias: polar residues. Disordered regions lie at residues 1011–1080 (TLRQ…VSAK) and 1100–1165 (NRDK…GRLP). Basic and acidic residues-rich tracts occupy residues 1055-1073 (CHIDSENNNKHRKSKDNLK), 1100-1113 (NRDKVYTIDGDKEP), and 1138-1149 (YQDHNDNYRKTE).

This sequence belongs to the glutamate-gated ion channel (TC 1.A.10.1) family. Heterotetramer. Forms heterotetrameric channels composed of two GluN1/zeta subunits (GRIN1), and two identical GluN2/epsilon subunits (GRIN2A, GRIN2B, GRIN2C or GRIN2D) or GluN3 subunits (GRIN3A or GRIN3B) (in vitro). In vivo, the subunit composition may depend on the expression levels of the different subunits.

It is found in the cell membrane. Its subcellular location is the postsynaptic cell membrane. The enzyme catalyses Ca(2+)(in) = Ca(2+)(out). It carries out the reaction Na(+)(in) = Na(+)(out). It catalyses the reaction K(+)(in) = K(+)(out). Component of N-methyl-D-aspartate (NMDA) receptors (NMDARs) that function as heterotetrameric, ligand-gated cation channels with high calcium permeability and voltage-dependent block by Mg(2+). MDARs participate in synaptic plasticity. Channel activation requires binding of the neurotransmitter L-glutamate to the GluN2 subunit, glycine binding to the GluN1 subunit, plus membrane depolarization to eliminate channel inhibition by Mg(2+). NMDARs mediate simultaneously the potasium efflux and the influx of calcium and sodium. Each GluN2 subunit confers differential attributes to channel properties, including activation, deactivation and desensitization kinetics, pH sensitivity, Ca2(+) permeability, and binding to allosteric modulators. Plays a role in dendritic branching in brain neurons and in synaptic plasticity. The polypeptide is Glutamate receptor ionotropic, NMDA 2A (Xenopus laevis (African clawed frog)).